Here is a 532-residue protein sequence, read N- to C-terminus: Autoinducer-2 kinase (532 aa).

The protein belongs to the FGGY kinase family.

It localises to the cytoplasm. It carries out the reaction (S)-4,5-dihydroxypentane-2,3-dione + ATP = (2S)-2-hydroxy-3,4-dioxopentyl phosphate + ADP + H(+). Its function is as follows. Catalyzes the phosphorylation of autoinducer-2 (AI-2) to phospho-AI-2, which subsequently inactivates the transcriptional regulator LsrR and leads to the transcription of the lsr operon. Phosphorylates the ring-open form of (S)-4,5-dihydroxypentane-2,3-dione (DPD), which is the precursor to all AI-2 signaling molecules, at the C5 position. The sequence is that of Autoinducer-2 kinase from Klebsiella pneumoniae subsp. pneumoniae (strain ATCC 700721 / MGH 78578).